We begin with the raw amino-acid sequence, 298 residues long: Chitin deacetylase (298 aa).

The N-terminal stretch at 1–16 is a signal peptide; sequence MLAPLFAALLAGAATA. Residues 39-222 enclose the NodB homology domain; that stretch reads NTFALTFDDG…AIKAKGLTPV (184 aa). D46 serves as the catalytic Proton acceptor. D46 contributes to the acetate binding site. Co(2+)-binding residues include D47, H99, and H103. Y140 provides a ligand contact to acetate. The active-site Proton donor is the H196. The 43-residue stretch at 256 to 298 folds into the Chitin-binding type-1 domain; it reads DDTCGGSNGYVCQNSQCCSQWGWCGTTSEYCAAGCQAAYGPCT. 4 disulfide bridges follow: C259–C273, C267–C279, C272–C286, and C290–C297.

Belongs to the polysaccharide deacetylase family. It depends on Co(2+) as a cofactor.

It is found in the secreted. The enzyme catalyses [(1-&gt;4)-N-acetyl-beta-D-glucosaminyl](n) + n H2O = chitosan + n acetate. With respect to regulation, inhibited by Fe(2+) and to a lesser extent by Mn(2+). Hydrolyzes the N-acetamido groups of N-acetyl-D-glucosamine polymers in chitin to form chitosan and acetate. May play a role in evasion of the host immune response; plant chitinases liberate chitin molecules from the fungal cell wall which act as elicitors of the plant immune response, deacetylation of the liberated chitin neutralizes elicitor activity. The sequence is that of Chitin deacetylase from Pestalotiopsis sp.